The primary structure comprises 214 residues: Probable transaldolase (214 aa).

The active-site Schiff-base intermediate with substrate is Lys-83.

This sequence belongs to the transaldolase family. Type 3B subfamily.

The protein resides in the cytoplasm. The catalysed reaction is D-sedoheptulose 7-phosphate + D-glyceraldehyde 3-phosphate = D-erythrose 4-phosphate + beta-D-fructose 6-phosphate. It functions in the pathway carbohydrate degradation; pentose phosphate pathway; D-glyceraldehyde 3-phosphate and beta-D-fructose 6-phosphate from D-ribose 5-phosphate and D-xylulose 5-phosphate (non-oxidative stage): step 2/3. Functionally, transaldolase is important for the balance of metabolites in the pentose-phosphate pathway. The sequence is that of Probable transaldolase from Streptococcus equi subsp. zooepidemicus (strain MGCS10565).